A 196-amino-acid polypeptide reads, in one-letter code: Beta-crystallin A4 (196 aa).

T2 carries the post-translational modification N-acetylthreonine. The segment at 2 to 11 is N-terminal arm; sequence TLQCTKSAGP. Beta/gamma crystallin 'Greek key' domains are found at residues 12 to 51 and 52 to 98; these read WKMV…KVLS and GAWV…RPAA. The connecting peptide stretch occupies residues 99 to 104; the sequence is CANHRD. 2 Beta/gamma crystallin 'Greek key' domains span residues 105–146 and 147–195; these read SRLT…HVHS and GAWV…RRIQ.

This sequence belongs to the beta/gamma-crystallin family. As to quaternary structure, homo/heterodimer, or complexes of higher-order. The structure of beta-crystallin oligomers seems to be stabilized through interactions between the N-terminal arms.

Its function is as follows. Crystallins are the dominant structural components of the vertebrate eye lens. The polypeptide is Beta-crystallin A4 (CRYBA4) (Homo sapiens (Human)).